The following is a 224-amino-acid chain: MRKASLELKGSSFTLSVLHINTSDLDSITLDLDKKLAQAPQFFIGAPLVLNLSAVEDGKLDLAALKDLLVSRQLVIVGVTGASEALSEQAKACGLASVKAGKQTQMPSPPSEPRTTRIVRQNVRSGQQIYVKNGDLIIFGAVGNGAEVIADGSIHIYGALRGKAMAGANGERDAVILASHLEPELISIAGQYWLTENLQKHGVTAKSGCVRLDGDSLTVEALPL.

The protein belongs to the MinC family. As to quaternary structure, interacts with MinD and FtsZ.

Its function is as follows. Cell division inhibitor that blocks the formation of polar Z ring septums. Rapidly oscillates between the poles of the cell to destabilize FtsZ filaments that have formed before they mature into polar Z rings. Prevents FtsZ polymerization. In Shewanella amazonensis (strain ATCC BAA-1098 / SB2B), this protein is Probable septum site-determining protein MinC.